The chain runs to 537 residues: NAD(P)H-quinone oxidoreductase chain 4 3 (537 aa).

Transmembrane regions (helical) follow at residues 6–26 (FPWL…IPII), 36–56 (WYGL…FWHY), 87–107 (LSMP…FAAW), 115–135 (LFYG…VAQD), 136–156 (LLLF…LISI), 169–189 (FILY…ALAF), 209–229 (AIEL…LPIF), 243–263 (SAPG…YALI), 277–297 (FAPV…CCAF), 314–334 (MGFV…GAVL), 335–355 (QMVS…VTYE), 387–407 (LALP…GIAT), and 417–437 (VVVV…LLSL).

The protein belongs to the complex I subunit 4 family.

The protein localises to the cellular thylakoid membrane. It catalyses the reaction a plastoquinone + NADH + (n+1) H(+)(in) = a plastoquinol + NAD(+) + n H(+)(out). The catalysed reaction is a plastoquinone + NADPH + (n+1) H(+)(in) = a plastoquinol + NADP(+) + n H(+)(out). Functionally, NDH-1 shuttles electrons from NAD(P)H, via FMN and iron-sulfur (Fe-S) centers, to quinones in the respiratory chain. The immediate electron acceptor for the enzyme in this species is believed to be plastoquinone. Couples the redox reaction to proton translocation (for every two electrons transferred, four hydrogen ions are translocated across the cytoplasmic membrane), and thus conserves the redox energy in a proton gradient. In Trichormus variabilis (strain ATCC 29413 / PCC 7937) (Anabaena variabilis), this protein is NAD(P)H-quinone oxidoreductase chain 4 3.